Reading from the N-terminus, the 309-residue chain is Isethionate sulfite-lyase activating enzyme (309 aa).

Residues 22-309 form the Radical SAM core domain; the sequence is HDGPGIRTVV…VVAAEHATDG (288 aa). 11 residues coordinate [4Fe-4S] cluster: C36, C40, C43, C62, C68, C71, C75, C95, C98, C102, and C106. 42–44 contacts S-adenosyl-L-methionine; that stretch reads WCS. 2 consecutive 4Fe-4S ferredoxin-type domains span residues 53-85 and 86-117; these read IELAYNTGRCLTLTKCVRCVEVCTMNAITRADD and DTISIDRALCEECGMFCAEACPSKALITYGTT. Residues G146, 195 to 197, and H268 each bind S-adenosyl-L-methionine; that span reads DIK.

The protein belongs to the organic radical-activating enzymes family. As to quaternary structure, monomer. The cofactor is [4Fe-4S] cluster.

The enzyme catalyses glycyl-[protein] + reduced [flavodoxin] + S-adenosyl-L-methionine = glycin-2-yl radical-[protein] + semiquinone [flavodoxin] + 5'-deoxyadenosine + L-methionine + H(+). Its pathway is organosulfur degradation; alkanesulfonate degradation. Its function is as follows. Involved in an anaerobic respiration pathway that converts the sulfonate isethionate (2-hydroxyethanesulfonate) to ammonia, acetate and sulfide. Catalyzes activation of the isethionate sulfite-lyase IslA under anaerobic conditions by generation of an organic free radical on a glycine residue, via a homolytic cleavage of S-adenosyl-L-methionine (SAM). The sequence is that of Isethionate sulfite-lyase activating enzyme from Oleidesulfovibrio alaskensis (strain ATCC BAA-1058 / DSM 17464 / G20) (Desulfovibrio alaskensis).